Consider the following 163-residue polypeptide: Thiol peroxidase (163 aa).

The Thioredoxin domain maps to 16–162; sequence LQVGDTAHDF…YDAAIAAVKN (147 aa). Cys-58 functions as the Cysteine sulfenic acid (-SOH) intermediate in the catalytic mechanism. An intrachain disulfide couples Cys-58 to Cys-92.

The protein belongs to the peroxiredoxin family. Tpx subfamily. Homodimer.

It catalyses the reaction a hydroperoxide + [thioredoxin]-dithiol = an alcohol + [thioredoxin]-disulfide + H2O. Functionally, thiol-specific peroxidase that catalyzes the reduction of hydrogen peroxide and organic hydroperoxides to water and alcohols, respectively. Plays a role in cell protection against oxidative stress by detoxifying peroxides. The polypeptide is Thiol peroxidase (Streptococcus gordonii).